A 99-amino-acid polypeptide reads, in one-letter code: N(2)-fixation sustaining protein CowN (99 aa).

Belongs to the CowN family.

Its function is as follows. Is required to sustain N(2)-dependent growth in the presence of low levels of carbon monoxide (CO). Probably acts by protecting the N(2) fixation ability of the nitrogenase complex, which is inactivated in the presence of CO. In Magnetococcus marinus (strain ATCC BAA-1437 / JCM 17883 / MC-1), this protein is N(2)-fixation sustaining protein CowN.